Consider the following 457-residue polypeptide: tRNA modification GTPase MnmE (457 aa).

Residues R25, E87, and R126 each contribute to the (6S)-5-formyl-5,6,7,8-tetrahydrofolate site. Residues 223–377 (GIATAIIGRP…IEEKINQLFF (155 aa)) enclose the TrmE-type G domain. Residue N233 coordinates K(+). Residues 233 to 238 (NVGKSS), 252 to 258 (TDIAGTT), and 277 to 280 (DTAG) contribute to the GTP site. Position 237 (S237) interacts with Mg(2+). T252, I254, and T257 together coordinate K(+). T258 provides a ligand contact to Mg(2+). Residue K457 coordinates (6S)-5-formyl-5,6,7,8-tetrahydrofolate.

It belongs to the TRAFAC class TrmE-Era-EngA-EngB-Septin-like GTPase superfamily. TrmE GTPase family. In terms of assembly, homodimer. Heterotetramer of two MnmE and two MnmG subunits. K(+) is required as a cofactor.

The protein resides in the cytoplasm. Its function is as follows. Exhibits a very high intrinsic GTPase hydrolysis rate. Involved in the addition of a carboxymethylaminomethyl (cmnm) group at the wobble position (U34) of certain tRNAs, forming tRNA-cmnm(5)s(2)U34. The polypeptide is tRNA modification GTPase MnmE (Streptococcus suis (strain 98HAH33)).